The primary structure comprises 381 residues: MIISSTNDYREAARRRVPPFMFHYADGGSFSERTLERNVTDLADLALRQRVLKDMSQLDTEIELFGEKLAMPAVLAPVGACGMYARRGEVQAAQAAENKGIPFTLSTVSICPIEEVTAAIKRPMWFQLYVLKDRGFMKHVLERAKAAGCSTLVFTVDMPTPGARYRDRHSGMSGDYKEIRRALQAVTHPFWAWDVGIKGKPHTLGNVSAYTGKAVGLDDYVVWLGENFDPSISWKDLEWIRDFWDGPMVIKGILDPEDAKDAVRFGADGIVVSNHGGRQLDGALSSARALPSIADAVKGDIKILADSGIRNGLDIVRMLALGADATMLGRAFVYALGAAGKAGVENMLDIFKKEMHVAMTLTSNQKISDITRDALVDLSKL.

In terms of domain architecture, FMN hydroxy acid dehydrogenase spans 1–380 (MIISSTNDYR…TRDALVDLSK (380 aa)). Tyrosine 24 lines the substrate pocket. Residues serine 106 and glutamine 127 each contribute to the FMN site. Position 129 (tyrosine 129) interacts with substrate. Threonine 155 contacts FMN. A substrate-binding site is contributed by arginine 164. Residue lysine 251 coordinates FMN. Catalysis depends on histidine 275, which acts as the Proton acceptor. Arginine 278 is a binding site for substrate. Residue 306–330 (DSGIRNGLDIVRMLALGADATMLGR) participates in FMN binding.

This sequence belongs to the FMN-dependent alpha-hydroxy acid dehydrogenase family. FMN serves as cofactor.

Its subcellular location is the cell inner membrane. The enzyme catalyses (S)-lactate + A = pyruvate + AH2. Functionally, catalyzes the conversion of L-lactate to pyruvate. Is coupled to the respiratory chain. This is L-lactate dehydrogenase from Actinobacillus pleuropneumoniae serotype 3 (strain JL03).